Reading from the N-terminus, the 333-residue chain is Ferredoxin--NADP reductase (333 aa).

The FAD site is built by aspartate 32, glutamine 40, tyrosine 45, alanine 85, phenylalanine 119, aspartate 285, and threonine 326.

Belongs to the ferredoxin--NADP reductase type 2 family. In terms of assembly, homodimer. Requires FAD as cofactor.

It catalyses the reaction 2 reduced [2Fe-2S]-[ferredoxin] + NADP(+) + H(+) = 2 oxidized [2Fe-2S]-[ferredoxin] + NADPH. This Neorickettsia sennetsu (strain ATCC VR-367 / Miyayama) (Ehrlichia sennetsu) protein is Ferredoxin--NADP reductase.